Consider the following 114-residue polypeptide: TYRO protein tyrosine kinase-binding protein (114 aa).

The first 27 residues, 1-27 (MGAPEPSWCFLFLPVLLTVGGLSPVQA), serve as a signal peptide directing secretion. Residues 28 to 42 (QSDNYPGCECSSVSP) are Extracellular-facing. The helical transmembrane segment at 43 to 63 (GVLAGIVLGDLVLTLLIALAV) threads the bilayer. Residue Asp-52 participates in Ca(2+) binding. Residues 64-114 (YSLGRLVSRGRGTADGTRKQHMAETESPYQELQGQRPEVYSDLNTQRQYYR) are Cytoplasmic-facing. The interval 72–114 (RGRGTADGTRKQHMAETESPYQELQGQRPEVYSDLNTQRQYYR) is disordered. In terms of domain architecture, ITAM spans 81–109 (RKQHMAETESPYQELQGQRPEVYSDLNTQ). Phosphotyrosine occurs at positions 92 and 103. The span at 105–114 (DLNTQRQYYR) shows a compositional bias: polar residues.

This sequence belongs to the TYROBP family. As to quaternary structure, homodimer; disulfide-linked. Homotrimer; disulfide-linked. Homotetramer; disulfide-linked. Homotrimers and homotetramers form when low levels of partner receptors are available and is competitive with assembly with interacting receptors. They may represent alternative oligomerization states or may be intermediates in the receptor assembly process. Binding of a metal cation aids in homooligomerization through coordination of the metal ion by the subunits of the oligomer. Interacts with TREM1. Interacts with TREM2. Interacts with CLECSF5. Interacts with CD300LB and CD300C2. Interacts with CD300E. Interacts (via ITAM domain) with SYK (via SH2 domains); activates SYK mediating neutrophils and macrophages integrin-mediated activation. Interacts with KLRC2. Interacts with CD300H. Interacts with KLRD1. Interacts with SIGLEC1. In terms of processing, following ligand binding by associated receptors, tyrosine phosphorylated in the ITAM domain which leads to activation of additional tyrosine kinases and subsequent cell activation.

The protein resides in the cell membrane. In terms of biological role, adapter protein which non-covalently associates with activating receptors found on the surface of a variety of immune cells to mediate signaling and cell activation following ligand binding by the receptors. TYROBP is tyrosine-phosphorylated in the ITAM domain following ligand binding by the associated receptors which leads to activation of additional tyrosine kinases and subsequent cell activation. Also has an inhibitory role in some cells. Non-covalently associates with activating receptors of the CD300 family to mediate cell activation. Also mediates cell activation through association with activating receptors of the CD200R family. Required for neutrophil activation mediated by integrin. Required for the activation of myeloid cells mediated by the CLEC5A/MDL1 receptor. Associates with natural killer (NK) cell receptors such as the KLRD1/KLRC2 heterodimer to mediate NK cell activation. Associates with TREM1 to mediate activation of neutrophils and monocytes. Associates with TREM2 on monocyte-derived dendritic cells to mediate up-regulation of chemokine receptor CCR7 and dendritic cell maturation and survival. PAssociation with TREM2 mediates cytokine-induced formation of multinucleated giant cells which are formed by the fusion of macrophages. Stabilizes the TREM2 C-terminal fragment (TREM2-CTF) produced by TREM2 ectodomain shedding which suppresses the release of pro-inflammatory cytokines. In microglia, required with TREM2 for phagocytosis of apoptotic neurons. Required with ITGAM/CD11B in microglia to control production of microglial superoxide ions which promote the neuronal apoptosis that occurs during brain development. Promotes pro-inflammatory responses in microglia following nerve injury which accelerates degeneration of injured neurons. ositively regulates the expression of the IRAK3/IRAK-M kinase and IL10 production by liver dendritic cells and inhibits their T cell allosimulatory ability. Negatively regulates B cell proliferation. Required for CSF1-mediated osteoclast cytoskeletal organization. Positively regulates multinucleation during osteoclast development. The polypeptide is TYRO protein tyrosine kinase-binding protein (Rattus norvegicus (Rat)).